Consider the following 439-residue polypeptide: Acyl-coenzyme A thioesterase 9, mitochondrial (439 aa).

The N-terminal 21 residues, 1-21 (MKRAAIRLWTLNKGLLTHGRG), are a transit peptide targeting the mitochondrion. HotDog ACOT-type domains follow at residues 85–209 (SYIE…RDSE) and 289–401 (EDTK…EKEV). Lys102 carries the post-translational modification N6-acetyllysine.

This sequence belongs to the acyl coenzyme A hydrolase family. As to quaternary structure, interacts with NYAP1, NYAP2 and MYO16. Widely expressed.

It localises to the mitochondrion. The protein resides in the mitochondrion matrix. Its subcellular location is the mitochondrion inner membrane. The enzyme catalyses butanoyl-CoA + H2O = butanoate + CoA + H(+). The catalysed reaction is propanoyl-CoA + H2O = propanoate + CoA + H(+). It carries out the reaction hexadecanoyl-CoA + H2O = hexadecanoate + CoA + H(+). It catalyses the reaction octanoyl-CoA + H2O = octanoate + CoA + H(+). The enzyme catalyses decanoyl-CoA + H2O = decanoate + CoA + H(+). The catalysed reaction is tetradecanoyl-CoA + H2O = tetradecanoate + CoA + H(+). It carries out the reaction 4,8-dimethylnonanoyl-CoA + H2O = 4,8-dimethylnonanoate + CoA + H(+). It catalyses the reaction 3-methylbutanoyl-CoA + H2O = 3-methylbutanoate + CoA + H(+). The enzyme catalyses 2-methylpropanoyl-CoA + H2O = 2-methylpropanoate + CoA + H(+). Its pathway is lipid metabolism; fatty acid metabolism. Its activity is regulated as follows. Strongly inhibited by NADH and CoA. Functionally, mitochondrial acyl-CoA thioesterase. Catalyzes the hydrolysis of acyl-CoAs into free fatty acids and coenzyme A (CoA), regulating their respective intracellular levels. Shows a clear preference for hydrophobic short-, medium-, and long-chain saturated acyl-CoAs with some activity also with short-chain dicarboxylic CoA esters. Regulates both mitochondrial lipid and amino acid metabolism. The sequence is that of Acyl-coenzyme A thioesterase 9, mitochondrial (Acot9) from Mus musculus (Mouse).